The sequence spans 219 residues: Orotate phosphoribosyltransferase (219 aa).

Lys26 contributes to the 5-phospho-alpha-D-ribose 1-diphosphate binding site. Residue 34 to 35 coordinates orotate; the sequence is FF. 5-phospho-alpha-D-ribose 1-diphosphate-binding positions include 72–73, Arg98, Lys99, Lys102, His104, and 124–132; these read YK and DDVITAGTA. Orotate is bound by residues Thr128 and Arg156.

Belongs to the purine/pyrimidine phosphoribosyltransferase family. PyrE subfamily. In terms of assembly, homodimer. Mg(2+) is required as a cofactor.

It carries out the reaction orotidine 5'-phosphate + diphosphate = orotate + 5-phospho-alpha-D-ribose 1-diphosphate. The protein operates within pyrimidine metabolism; UMP biosynthesis via de novo pathway; UMP from orotate: step 1/2. Catalyzes the transfer of a ribosyl phosphate group from 5-phosphoribose 1-diphosphate to orotate, leading to the formation of orotidine monophosphate (OMP). This chain is Orotate phosphoribosyltransferase, found in Xanthomonas axonopodis pv. citri (strain 306).